Consider the following 336-residue polypeptide: MRILGIETSCDETGVAVIDAERGLLSHALYSQVALHAEYGGVVPELASRDHIRKLLPLVRQALDGADTAASDLTGIAYTSGPGLLGALLVGAGVARSLAWAWGLPAVGVHHMEGHLLAPLLGDEPPEFPFLALLVSGGHTMLVDVQGVGRYRILGESLDDAAGEAFDKTAKLLGLSYPGGPALAALAERGDPARFSFPRPMTDRPGLDFSFSGLKTRALTTLRETRTEQDRADVARAFEEAVVDTLVIKCLRAVQETGAERLVVAGGVGANRRLRQRLKEAVGAEGASVHYPPFEFCTDNGAMIALAGLMRFQAGAGEDLTIRARARWNLESKSEV.

His-111 and His-115 together coordinate Fe cation. Substrate-binding positions include 134–138 (LVSGG), Asp-167, Gly-180, and Asn-271. Asp-299 lines the Fe cation pocket.

This sequence belongs to the KAE1 / TsaD family. Fe(2+) serves as cofactor.

It is found in the cytoplasm. The catalysed reaction is L-threonylcarbamoyladenylate + adenosine(37) in tRNA = N(6)-L-threonylcarbamoyladenosine(37) in tRNA + AMP + H(+). Required for the formation of a threonylcarbamoyl group on adenosine at position 37 (t(6)A37) in tRNAs that read codons beginning with adenine. Is involved in the transfer of the threonylcarbamoyl moiety of threonylcarbamoyl-AMP (TC-AMP) to the N6 group of A37, together with TsaE and TsaB. TsaD likely plays a direct catalytic role in this reaction. The sequence is that of tRNA N6-adenosine threonylcarbamoyltransferase from Thioalkalivibrio sulfidiphilus (strain HL-EbGR7).